A 2284-amino-acid chain; its full sequence is MWQISEGSQCCCTGKTWSNAEAKEARYVCNCILSCRLVKVEVVPQLPKSRIAPAQDKAERITPLCNSNGGAAPTIPKSKRAFEPRTPLIKQRCDVVVRVGPPADLDLVYPALVQEEVAIPPTEKVLQPTLKAEVRVPIFCAPKRMVAFPKPPTKIASKRDALQFPAGAVAFNGINFIDAKGKVVLSEGAKRILKGIRVAKQQRQRTARRSAACKKVRKARDLALFKRLSEECTFQDLPGGFAGEIPAGHACYRKVAAPTTSFKKEVSKGKKAKKPSTPVLPAQDFSCVDSFDWGEKSSPVEIEDDWVLIEKPVLQRQAAHSAQGRATEALTRFAASGGFTVKAHQKVEELASSGEAGHLIAGEFAELCLRSLVYNDAPVLSASIEELITEQDFKDAIELFNIELAELPTDSTTCGQFNDWASAAKKMAKGVGSIVGDFARMSGAGVLITFDRCIEYLQKKALTFCQKVFNATMAPYLSHLAEASNIISKIWKKLAEWMESLKGKAGLALEVLAQHAIFALGAIVVGGVVVLVEKVLVACKVIPNCGIVLGAFLTLFFASLGLTALECTAEEIFRMHQCCKGAIYSMYSVKEPMNEAEGSSVTMGVLQGLDNAISALTRVGQSMISFKLGSFSYYAKIAQGFDQLARGKKAIGELTGWLIDLVGGVYSKVSGQESTFFDELSTIVCLDVRSWLLKSKRVRLQVETMAIGDRITLDTISKPTGMQGHKILITAAGVPRKTSADFTMCIKEEVSKLEEVHQRTACAGINEGMRQFPFWVYIFGASQSGKTTIANSVIIPSLLEEMNLPKTSVYSRPKTGGFWSGYARQACVKVDDFYAIEQTPSLASSMIDVVNSEPYPLDMAYLHEKGMSMDSPLVVTTANTVKPPTNAGITDEASFFNRRAAVIEVRRKDNTHFTPRAYDNCIEVRFLHNKCAYVDSEGIPQGPAVNTPMEEGWISPSEAVATLKNLLGEHVLAEEEKLLDYRERIGNDHPIYNAAQEFIGNMHYPGQWLTTEQKNTYGINEEGFSFLAVDGKMYKYNVLGKLNPCETVPPHPNVIPWLEEKTLSIVHWDAHKHIATGPRNALVSCFLQGLVQDQSRVQSVDLMGKDSSPEQQAFFKRLTLSERIYLRLCQIRIDAVKKEQLSSVSRGALDVLRDCMYKSKAKLVENYSLLLTLVAILVLIATAYSLISTLIGLAGCSSFAGGMVALNHVSNASIPCSEPRLEEGYIPRNKFVSRISRTRGDGPAQGQGDHEELVTELYYYFDGVKRLISCCWFKGRSLLLTRHQAMAIPIGNEIQVIYADGTERKLVWPGRQEDRSCKGYIEFPDNELVVFEHARLLTMPIKYEKFFVDDPDHQISPNVAVKCCVARLEDGIPQFHFWNKYASARSDVHTIKDEGGSAVYQNKIRRYIIYAHEAKRNDCGAIAVAEIQRTPKVLAMLVSGIGNVTYSSVIPSYSSSFVRGDVPYVPEDGIKTNGYRKVGYLMAKDAPHVPSKTAFMKVPDEICFPYPNPKQPAILSAEDERLIGTVHEGYTPIREGMKKFAEPMHLLDAQLLDEVAGDMVHTWFDAGEILEDVPLSIAINGDVEEEYFDPIAMDTSEGYPEVLQRKNGEKGKARFFVGEPGAREFVPGCGPERAYLSLEEECKTRIPSLVSIETPKDERLKRSKIETPGTRLFSVLPLAYNLLLRVKFLSFSRLLMKKRSHLPCQVGINPYSREWTDLYHRLAEKSDVGYNCDYKGFDGLITEQILAVVATMINAGFRNPVSNQQRSNLLMAISGRLSICGSQVYETEAGIPSGCALTVVINSIFNELLMRYCYKKIVPPIYRECFDRCVVLITYGDDNVFTVSQSIMTSFTGDALKAEMANLGVTITDGKDKSLATIPARPLLELEFLKRGFKKGNGGLIYAPLEKLSIMSSLVYIRSDGSDMLQKLVDNVNTALVELYLHQDREYSESVRDFYLEKLPPGSYKELTTWYEAQIFHECQLSGESGWKPQGLIEVSHGASFASFVQQNGTELERHDICPGLAISGSKYIAREEEILMSLSSLLPGDINAVKLTLKCGDGIGRLPSKASVLSQRKPGIVMQLCARAIKEKKTLVIRDERPYIGGWAMACICGESFGFSIKDTLALYANLMGPNRKNGLATYFTDFDSPVHVKKIHAITNGEEGVAMLKDSFAFCEPTTIAATSCDTRKEMVSHLPTSFPNIVLIGGISYPKEGGEPGALYSPTDVVMSKKLQGVYVSEAVLKCCLRCPGAAVKTVLQTSSPGSSLSQAHFRSLRRVQSHRCMRKS.

Over 567–1172 the chain is Cytoplasmic; it reads CTAEEIFRMH…LVENYSLLLT (606 aa). An SF3 helicase domain is found at 750-918; that stretch reads VSKLEEVHQR…DNTHFTPRAY (169 aa). An ATP-binding site is contributed by 780-787; it reads GASQSGKT. Residues 1173 to 1193 form a helical membrane-spanning segment; that stretch reads LVAILVLIATAYSLISTLIGL. Topologically, residues 1194–1216 are lumenal; the sequence is AGCSSFAGGMVALNHVSNASIPC. Ser1217 carries the post-translational modification O-(5'-phospho-RNA)-serine. Residues 1242 to 1457 form the Peptidase C3 domain; that stretch reads GPAQGQGDHE…SVIPSYSSSF (216 aa). Active-site for picornain 3C-like protease activity residues include His1283, Glu1327, and Cys1419. In terms of domain architecture, RdRp catalytic spans 1727-1851; sequence DVGYNCDYKG…TVSQSIMTSF (125 aa).

It belongs to the nepoviruses RNA1 polyprotein family. Specific enzymatic cleavages by picornain 3C-like protease in vivo yield mature proteins. Picornain 3C-like protease is autocatalytically processed. In terms of processing, VPg is uridylylated by the polymerase and is covalently linked to the 5'-end of genomic RNA. This uridylylated form acts as a nucleotide-peptide primer for the polymerase.

The protein localises to the host endoplasmic reticulum lumen. Its subcellular location is the host endoplasmic reticulum membrane. The enzyme catalyses RNA(n) + a ribonucleoside 5'-triphosphate = RNA(n+1) + diphosphate. Its function is as follows. Picornain 3C-like protease is a thiol protease that cleaves the P1 and P2 polyproteins. The sequence is that of RNA1 polyprotein from Vitis vinifera (Grape).